The sequence spans 109 residues: uncharacterized protein (109 aa).

Positions Asn-36–Lys-109 are disordered. Residues Asn-39–Asn-88 show a composition bias toward low complexity. Basic residues predominate over residues Gln-99–Lys-109.

This is an uncharacterized protein from Dictyostelium discoideum (Social amoeba).